The chain runs to 313 residues: Solute carrier family 35 member E3 (313 aa).

9 helical membrane-spanning segments follow: residues 17-37 (GLLFNLLVSICIVFLNKWIYV), 40-60 (GFPNMSLTLVHFVVTWLGLYI), 77-97 (LLLLALSFCGFVVFTNLSLQN), 126-143 (FSTRIQLTLIPITLGVIL), 153-173 (FLGMVFAALGVLVTSLYQVWV), 187-206 (LLYYQAPMSSAMLLVAVPFF), 225-245 (LMVLLSGVIAFMVNLSIYWII), 252-272 (TYNMFGHFKFCITLFGGYVLF), and 275-295 (PLSINQALGILCTLFGILAYT).

The protein belongs to the TPT transporter family. SLC35E subfamily.

The protein resides in the membrane. Putative transporter. This chain is Solute carrier family 35 member E3 (SLC35E3), found in Homo sapiens (Human).